The chain runs to 56 residues: Large ribosomal subunit protein bL32 (56 aa).

Residues Met1 to His37 are disordered. Residues Lys7 to Arg16 show a composition bias toward basic residues. Polar residues predominate over residues Ala21 to Ala31.

Belongs to the bacterial ribosomal protein bL32 family.

The polypeptide is Large ribosomal subunit protein bL32 (Shewanella pealeana (strain ATCC 700345 / ANG-SQ1)).